Here is a 143-residue protein sequence, read N- to C-terminus: Hypoxic response protein 1 (143 aa).

CBS domains are found at residues 8–65 and 73–131; these read MNAG…GLDP and LARD…IVQF. A disulfide bond links Cys14 and Cys39. 2 residues coordinate Zn(2+): His97 and His122.

Homodimer.

It is found in the secreted. Functionally, unlike some other CBS-domain containing proteins does not seem to bind AMP. This chain is Hypoxic response protein 1 (hrp1), found in Mycobacterium tuberculosis (strain CDC 1551 / Oshkosh).